Here is a 423-residue protein sequence, read N- to C-terminus: Serine hydroxymethyltransferase (423 aa).

Residues L120 and 124 to 126 (GHL) each bind (6S)-5,6,7,8-tetrahydrofolate. Residue K229 is modified to N6-(pyridoxal phosphate)lysine. (6S)-5,6,7,8-tetrahydrofolate is bound at residue 353–355 (SPF).

The protein belongs to the SHMT family. As to quaternary structure, homodimer. Requires pyridoxal 5'-phosphate as cofactor.

It localises to the cytoplasm. The catalysed reaction is (6R)-5,10-methylene-5,6,7,8-tetrahydrofolate + glycine + H2O = (6S)-5,6,7,8-tetrahydrofolate + L-serine. Its pathway is one-carbon metabolism; tetrahydrofolate interconversion. The protein operates within amino-acid biosynthesis; glycine biosynthesis; glycine from L-serine: step 1/1. Catalyzes the reversible interconversion of serine and glycine with tetrahydrofolate (THF) serving as the one-carbon carrier. This reaction serves as the major source of one-carbon groups required for the biosynthesis of purines, thymidylate, methionine, and other important biomolecules. Also exhibits THF-independent aldolase activity toward beta-hydroxyamino acids, producing glycine and aldehydes, via a retro-aldol mechanism. This is Serine hydroxymethyltransferase from Prochlorococcus marinus (strain MIT 9301).